A 105-amino-acid chain; its full sequence is Large ribosomal subunit protein uL24 (105 aa).

Belongs to the universal ribosomal protein uL24 family. As to quaternary structure, part of the 50S ribosomal subunit.

Its function is as follows. One of two assembly initiator proteins, it binds directly to the 5'-end of the 23S rRNA, where it nucleates assembly of the 50S subunit. In terms of biological role, one of the proteins that surrounds the polypeptide exit tunnel on the outside of the subunit. In Dictyoglomus thermophilum (strain ATCC 35947 / DSM 3960 / H-6-12), this protein is Large ribosomal subunit protein uL24.